A 450-amino-acid polypeptide reads, in one-letter code: Glucose-6-phosphate isomerase (450 aa).

T39 carries the phosphothreonine modification. E291 serves as the catalytic Proton donor. Catalysis depends on residues H312 and K426.

It belongs to the GPI family.

The protein resides in the cytoplasm. It carries out the reaction alpha-D-glucose 6-phosphate = beta-D-fructose 6-phosphate. The protein operates within carbohydrate biosynthesis; gluconeogenesis. Its pathway is carbohydrate degradation; glycolysis; D-glyceraldehyde 3-phosphate and glycerone phosphate from D-glucose: step 2/4. Functionally, catalyzes the reversible isomerization of glucose-6-phosphate to fructose-6-phosphate. The protein is Glucose-6-phosphate isomerase of Bacillus cereus (strain G9842).